Consider the following 727-residue polypeptide: Two-component response regulator-like APRR7 (727 aa).

A disordered region spans residues 1–47; that stretch reads MNANEEGEGSRYPITDRKTGETKFDRVESRTEKHSEEEKTNGITMDV. Residues 14–40 show a composition bias toward basic and acidic residues; the sequence is ITDRKTGETKFDRVESRTEKHSEEEKT. The Response regulatory domain occupies 79–197; it reads RVLLVENDDC…ELKILWQHVW (119 aa). Disordered stretches follow at residues 203 to 265, 291 to 312, 339 to 416, 464 to 487, 509 to 560, and 606 to 670; these read SSGS…KKAV, NPEF…QEHD, KDEP…KTLD, SRYN…SLQD, ESLP…QPLP, and VNGS…SQRE. Residues 246–259 are compositionally biased toward low complexity; sequence ASDGSSDGSGAQSS. Composition is skewed to polar residues over residues 344 to 353, 467 to 487, and 519 to 535; these read SKTTGIMRQD, NPAS…SLQD, and VGSN…NNAF. Over residues 538-555 the composition is skewed to low complexity; that stretch reads PGAPKVSSAGSSSVKHSS. The segment covering 641 to 657 has biased composition (gly residues); sequence GKNGNGDGSGSGSGSGS. Positions 669-711 constitute a CCT domain; the sequence is REAALTKFRQKRKERCFRKKVRYQSRKKLAEQRPRVRGQFVRK.

It belongs to the ARR-like family. In terms of processing, phosphorylated. Phosphorylation varies throughout the diurnal cycle.

The protein resides in the nucleus. Transcriptional repressor of CCA1 and LHY, and positive regulator of LWD1 and LWD2 expression. Represses the expression of other clock proteins and master regulators of plant growth, development and response to abiotic stress. Involved in the positive and negative feedback loops of the circadian clock. Controls photoperiodic flowering response and temperature compensation. Expression of several members of the ARR-like family is controlled by circadian rhythm. APRR9, APRR7, and APRR5 coordinately act on the upstream region of the target genes to repress their expression from noon until midnight. The particular coordinated sequential expression of APRR9, APRR7, APRR5, APRR3 and APPR1 result to circadian waves that may be at the basis of the endogenous circadian clock. This is Two-component response regulator-like APRR7 (APRR7) from Arabidopsis thaliana (Mouse-ear cress).